The following is a 486-amino-acid chain: MDIFYNLIKCLIFSTYWLLIANITFRVLIKRRNIPYSMSWLLTIYIIPFIGISIWFFFGELYLGKRQKKIANRIWSISNKWLHELKSCTYIFQIKNSEVATSIFQLCKNRQGLHGIKSKKIKLLTNTKKIMQILIRDIYLARKNIEMVFYIWKPGGMADDVAIALIDSAKRGIHCRLMLDSAGSIEFFQSPWVEIMRKSGIQVVEALKVNLLRVFLRRVDVRQHRKIILIDNYIAYSGSMNLVDPYLFKKSSGIGQWIDLMTRIEGPIATTMGIIYSCDWEIETGLKILPQLPNKKMLENQSNKNASIQVIASGPGFLKNMIHQALLTAIYSAKRELIITTPYLVPSEDLLEAICTAAQRGVEVSIIIPLYHDSILVKWASRVFFSELLEAGVKIFQFQKGLLHSKSILVDQQLSLIGTVNLDMRSLWLNFEITLVIDDSDFGRNLFCIQNKYISDSQLIDKKAWSMRAYWKRILEKIFYFLSPLL.

2 consecutive transmembrane segments (helical) span residues 3-23 and 38-58; these read IFYNLIKCLIFSTYWLLIANI and MSWLLTIYIIPFIGISIWFFF. 2 consecutive PLD phosphodiesterase domains span residues 219-246 and 399-426; these read VDVRQHRKIILIDNYIAYSGSMNLVDPY and QKGLLHSKSILVDQQLSLIGTVNLDMRS. Active-site residues include His224, Lys226, Asp231, His404, Lys406, and Asp411.

It belongs to the phospholipase D family. Cardiolipin synthase subfamily. ClsA sub-subfamily.

The protein resides in the cell inner membrane. The enzyme catalyses 2 a 1,2-diacyl-sn-glycero-3-phospho-(1'-sn-glycerol) = a cardiolipin + glycerol. Functionally, catalyzes the reversible phosphatidyl group transfer from one phosphatidylglycerol molecule to another to form cardiolipin (CL) (diphosphatidylglycerol) and glycerol. The protein is Cardiolipin synthase A of Buchnera aphidicola subsp. Acyrthosiphon pisum (strain 5A).